The chain runs to 283 residues: tRNA pseudouridine synthase A (283 aa).

D52 acts as the Nucleophile in catalysis. Y148 is a substrate binding site.

This sequence belongs to the tRNA pseudouridine synthase TruA family. Homodimer.

The catalysed reaction is uridine(38/39/40) in tRNA = pseudouridine(38/39/40) in tRNA. Formation of pseudouridine at positions 38, 39 and 40 in the anticodon stem and loop of transfer RNAs. This is tRNA pseudouridine synthase A from Orientia tsutsugamushi (strain Ikeda) (Rickettsia tsutsugamushi).